Here is a 650-residue protein sequence, read N- to C-terminus: tRNA-dihydrouridine(47) synthase [NAD(P)(+)]-like (650 aa).

Disordered regions lie at residues methionine 1–glutamate 24 and glutamate 46–lysine 120. N-acetylalanine is present on alanine 2. 2 stretches are compositionally biased toward basic and acidic residues: residues lysine 48 to glutamate 58 and proline 70 to aspartate 79. Residues lysine 101 to valine 113 show a composition bias toward basic residues. 2 consecutive C3H1-type zinc fingers follow at residues tyrosine 118–glycine 148 and alanine 156–proline 186. Residues phenylalanine 235 to proline 284 form a disordered region. Position 236 is a phosphoserine (serine 236). The residue at position 273 (threonine 273) is a Phosphothreonine. A phosphoserine mark is found at serine 276 and serine 277. Residues proline 311 to threonine 313 and glutamine 365 each bind FMN. The active-site Proton donor is cysteine 396. A Glycyl lysine isopeptide (Lys-Gly) (interchain with G-Cter in SUMO2) cross-link involves residue lysine 416. FMN-binding positions include lysine 435, histidine 465, asparagine 497 to aspartate 499, and alanine 520 to arginine 521.

It belongs to the Dus family. Dus3 subfamily. FMN is required as a cofactor.

The enzyme catalyses 5,6-dihydrouridine(47) in tRNA + NAD(+) = uridine(47) in tRNA + NADH + H(+). The catalysed reaction is 5,6-dihydrouridine(47) in tRNA + NADP(+) = uridine(47) in tRNA + NADPH + H(+). It carries out the reaction a 5,6-dihydrouridine in mRNA + NAD(+) = a uridine in mRNA + NADH + H(+). It catalyses the reaction a 5,6-dihydrouridine in mRNA + NADP(+) = a uridine in mRNA + NADPH + H(+). In terms of biological role, catalyzes the synthesis of dihydrouridine, a modified base, in various RNAs, such as tRNAs, mRNAs and some long non-coding RNAs (lncRNAs). Mainly modifies the uridine in position 47 (U47) in the D-loop of most cytoplasmic tRNAs. Also able to mediate the formation of dihydrouridine in some mRNAs, thereby regulating their translation. This chain is tRNA-dihydrouridine(47) synthase [NAD(P)(+)]-like, found in Homo sapiens (Human).